The sequence spans 1018 residues: Serine/threonine-protein kinase 31 (1018 aa).

The Tudor domain maps to 78–137 (NLDPKKIYGGLFSEDKCWYRCKVLKTISDDKCLVRYIDYGNTEILNRSDIVEIPPELQFS). Residues 298–358 (AKIKQDQKLI…TKHLESTLKT (61 aa)) adopt a coiled-coil conformation. The Protein kinase domain maps to 711–1018 (IGLLKYMNSG…EKTRNGEANP (308 aa)). Residues 717–725 (MNSGGLLTM) and K738 each bind ATP. A disordered region spans residues 988–1018 (IECTQHSREDESKMESLDRYSEKTRNGEANP).

The protein belongs to the protein kinase superfamily. Ser/Thr protein kinase family. Testis specific. Expressed only in male germ cells.

The catalysed reaction is L-seryl-[protein] + ATP = O-phospho-L-seryl-[protein] + ADP + H(+). The enzyme catalyses L-threonyl-[protein] + ATP = O-phospho-L-threonyl-[protein] + ADP + H(+). In Mus musculus (Mouse), this protein is Serine/threonine-protein kinase 31 (Stk31).